Consider the following 311-residue polypeptide: Methionyl-tRNA formyltransferase (311 aa).

Residue 110–113 (SLLP) coordinates (6S)-5,6,7,8-tetrahydrofolate.

The protein belongs to the Fmt family.

The catalysed reaction is L-methionyl-tRNA(fMet) + (6R)-10-formyltetrahydrofolate = N-formyl-L-methionyl-tRNA(fMet) + (6S)-5,6,7,8-tetrahydrofolate + H(+). Its function is as follows. Attaches a formyl group to the free amino group of methionyl-tRNA(fMet). The formyl group appears to play a dual role in the initiator identity of N-formylmethionyl-tRNA by promoting its recognition by IF2 and preventing the misappropriation of this tRNA by the elongation apparatus. This Streptococcus gordonii (strain Challis / ATCC 35105 / BCRC 15272 / CH1 / DL1 / V288) protein is Methionyl-tRNA formyltransferase.